We begin with the raw amino-acid sequence, 614 residues long: Vitamin B12 transporter BtuB (614 aa).

The N-terminal stretch at 1-20 (MIKKASLLTACSVTAFSAWA) is a signal peptide. The short motif at 26 to 33 (DTLVVTAN) is the TonB box element. The TBDR plug domain occupies 38 to 152 (PRSTVLAPTT…IGGVVNIITT (115 aa)). Residues Leu83, Ser85, Asn92, and 110 to 111 (VS) contribute to the cyanocob(III)alamin site. Positions 155–614 (HPGTEISAGW…EYTLXGSYTF (460 aa)) constitute a TBDR beta-barrel domain. Transmembrane regions (beta stranded) follow at residues 158-165 (TEISAGWG), 169-178 (YQNYDVSTQQ), and 184-195 (TRVTLLGDYAHT). Residues Asp199, Gln211, Asp213, and Asp215 each coordinate Ca(2+). 2 consecutive transmembrane segments (beta stranded) span residues 217-227 (FLSKTLYGALE) and 232-248 (DAWS…NRTN). Tyr249 and Asp250 together coordinate Ca(2+). Ala251 provides a ligand contact to cyanocob(III)alamin. Residue Asp261 coordinates Ca(2+). Transmembrane regions (beta stranded) follow at residues 263–277 (RKLY…LRYN), 279–296 (ELIK…KDYN), 309–325 (TLDE…NNII), 328–337 (HGNIGAGVDW), 353–369 (YDQR…QQVG), 371–381 (FTFEGAGRSDD), 385–400 (FGRH…WEFI), 403–417 (YRFI…KAPN), 434–443 (KSKQWEGAFE), 449–458 (VNWRISGYRN), 473–490 (YYNE…TANF), 494–509 (PLTH…ARNA), 517–529 (RRAK…QLDW), and 535–550 (DWGI…YDKD). Thr309 is a binding site for cyanocob(III)alamin. Residue Arg517 coordinates cyanocob(III)alamin. Tyr551 provides a ligand contact to cyanocob(III)alamin. The next 3 beta stranded transmembrane spans lie at 558 to 572 (TVKM…LAVA), 585 to 596 (IANLFDKDYETV), and 602 to 614 (AGRE…SYTF). The TonB C-terminal box signature appears at 597–614 (YGYQTAGREYTLXGSYTF).

This sequence belongs to the TonB-dependent receptor family. BtuB (TC 1.B.14.3.1) subfamily.

It localises to the cell outer membrane. Its function is as follows. Involved in the active translocation of vitamin B12 (cyanocobalamin) across the outer membrane to the periplasmic space. It derives its energy for transport by interacting with the trans-periplasmic membrane protein TonB. The polypeptide is Vitamin B12 transporter BtuB (Escherichia coli O6:H1 (strain CFT073 / ATCC 700928 / UPEC)).